A 386-amino-acid polypeptide reads, in one-letter code: MLSHIYKKEMIDALRDRKTILLTILVPMIMMLGLVFFYESMLSDKGEQYTLAVGHSLPPALESKLNEIDEISVKTFAKPEEAVDEGKADAYLNVPKEFDSYVNSMTPFKVDVYGNSIDQGSSNAMQLVQSALDQYKNEIVQQRLTNKHIDQSVIQPFTIQQKEADEEKGTSAIMLSAILPMLILTSIVSGAMPIALDIMAGEKDRKSIEALLLTPVSRNKVLVGKWLAVSTFGVASGVFALVFLILSTVLFTENLKTAFQLGDHMWSVIGASALIIVLSALLISAMELFISIMSSSVKEAQSYMSLVVFLPVFPMFFIFSKAPNQFDLSYFLIPFLNLHALFKQLLFGMVDPATILSTSGTIAVLIAIFFLLARACFLKDKWVLPK.

A run of 6 helical transmembrane segments spans residues Thr-19 to Glu-39, Ala-172 to Met-192, Trp-226 to Leu-246, Ala-273 to Met-293, Ala-300 to Ser-320, and Ala-353 to Ala-373.

In terms of assembly, the complex is composed of NatA and NatB.

The protein localises to the cell membrane. It catalyses the reaction Na(+)(in) + ATP + H2O = Na(+)(out) + ADP + phosphate + H(+). In terms of biological role, part of an ABC transporter that catalyzes ATP-dependent electrogenic sodium extrusion. The polypeptide is ABC transporter permease protein NatB (Bacillus subtilis (strain 168)).